An 89-amino-acid chain; its full sequence is Myrmicitoxin(1)-Pr2a (89 aa).

A signal peptide spans 1-23 (MEIPKLLYIAVIAIGLSGSLTCA). The propeptide occupies 24-61 (TPLANPWADPEAEANPEAKAIAEATAEAIAEALAEPEP). Asparagine amide is present on Asn88.

It belongs to the formicidae venom clade 1 family. As to expression, expressed by the venom gland.

It localises to the secreted. Functionally, vertebrate-selective toxin that causes pain by targeting voltage-gated sodium channels. The polypeptide is Myrmicitoxin(1)-Pr2a (Pogonomyrmex rugosus (Desert harvester ant)).